A 58-amino-acid chain; its full sequence is Small ribosomal subunit protein eS30 (58 aa).

The segment at 1–58 is disordered; that stretch reads MGKVHGSLARAGKVKNQTPKVPKLDKKKRLTGRAKKRQLYNRRFSDNGGRKKGPNSKA. The segment covering 25-40 has biased composition (basic residues); sequence DKKKRLTGRAKKRQLY.

It belongs to the eukaryotic ribosomal protein eS30 family. As to quaternary structure, component of the small ribosomal subunit. Mature ribosomes consist of a small (40S) and a large (60S) subunit. The 40S subunit contains about 32 different proteins and 1 molecule of RNA (18S). The 60S subunit contains about 42 different proteins and 3 molecules of RNA (28S, 5.8S and 5S).

Its subcellular location is the cytoplasm. Component of the ribosome, a large ribonucleoprotein complex responsible for the synthesis of proteins in the cell. The small ribosomal subunit (SSU) binds messenger RNAs (mRNAs) and translates the encoded message by selecting cognate aminoacyl-transfer RNA (tRNA) molecules. The large subunit (LSU) contains the ribosomal catalytic site termed the peptidyl transferase center (PTC), which catalyzes the formation of peptide bonds, thereby polymerizing the amino acids delivered by tRNAs into a polypeptide chain. The nascent polypeptides leave the ribosome through a tunnel in the LSU and interact with protein factors that function in enzymatic processing, targeting, and the membrane insertion of nascent chains at the exit of the ribosomal tunnel. This is Small ribosomal subunit protein eS30 from Plasmodium falciparum (isolate 3D7).